The primary structure comprises 564 residues: MEGDQRSGPPAQSLLPDGHLVLWTLCSVLLPVFITLWCSLQRSRRQLHRRDIFRKSKHCWRDTDLFSHPTYCCVCAQHILQGAFCDCCGLRVDEGCLKKVDKRFPCKEIMLKNDKAADAMPHHWIRGNVPLCSYCVFCRQQCGSQPKLCDYRCIWCQKTVHDECMRGSLRSEKCDFGEFRNLIIPPSYLTSINQMRKDKNTNYEGLASKFGKQWTPLIILANSRSGTNMGEGLLGEFKILLNPVQVFDVTKTPPIKALQLCTLLPYYSVRVLVCGGDGTVGWVLDAIDEMKIKGQEKYIPEVAVLPLGTGNDLSNTLGWGTGYAGEIPVAQVLRNVMEADGIKLDRWKVQVTNKGYYNLRKPKEFTMNNYFSVGPDALMALNFHAHREKAPSLFSSRILNKAVYLFYGTKDCLVQECKDLNKKIELELDGERVELPNLEGIIVLNIGYWGGGCRLWEGMGDETYPLARHDDGLLEIVGVYGSFHCAQIQVKLANPFRIGQAHTVRLTLKCSMMPMQVDGEPWAQGPCTVTITHKTHALMLYFSGEQSDDDISSPSDHEDVKEAE.

The helical transmembrane segment at 20-40 (LVLWTLCSVLLPVFITLWCSL) threads the bilayer. 2 Phorbol-ester/DAG-type zinc fingers span residues 57–106 (KHCW…RFPC) and 121–174 (PHHW…SEKC). The 142-residue stretch at 212–353 (KQWTPLIILA…LDRWKVQVTN (142 aa)) folds into the DAGKc domain.

It belongs to the eukaryotic diacylglycerol kinase family. Highly expressed in brain and heart. In brain, highly expressed in Purkinje cells of the cerebellum, pyramidal cells of the hippocampus, mitral cells of the olfactory bulb, and neurons of the substantia nigra. Lower expression in neurons of the thalamus, superior olive, and lateral reticular nucleus is also detected. Expressed in platelets.

Its subcellular location is the membrane. It localises to the cytoplasm. It carries out the reaction a 1,2-diacyl-sn-glycerol + ATP = a 1,2-diacyl-sn-glycero-3-phosphate + ADP + H(+). The enzyme catalyses 1-hexadecanoyl-2-(5Z,8Z,11Z,14Z-eicosatetraenoyl)-sn-glycerol + ATP = 1-hexadecanoyl-2-(5Z,8Z,11Z,14Z-eicosatetraenoyl)-sn-glycero-3-phosphate + ADP + H(+). It catalyses the reaction 1-octadecanoyl-2-(5Z,8Z,11Z,14Z-eicosatetraenoyl)-sn-glycerol + ATP = 1-octadecanoyl-2-(5Z,8Z,11Z,14Z-eicosatetraenoyl)-sn-glycero-3-phosphate + ADP + H(+). The catalysed reaction is 1-eicosanoyl-2-(5Z,8Z,11Z,14Z)-eicosatetraenoyl-sn-glycerol + ATP = 1-eicosanoyl-2-(5Z,8Z,11Z,14Z)-eicosatetraenoyl-sn-glycero-3-phosphate + ADP + H(+). It carries out the reaction 1,2-di-(5Z,8Z,11Z,14Z)-eicosatetraenoyl-sn-glycerol + ATP = 1,2-di-(5Z,8Z,11Z,14Z)-eicosatetraenoyl-sn-glycero-3-phosphate + ADP + H(+). The enzyme catalyses 1-octadecanoyl-2-(9Z,12Z)-octadecadienoyl-sn-glycerol + ATP = 1-octadecanoyl-2-(9Z,12Z-octadecadienoyl)-sn-glycero-3-phosphate + ADP + H(+). It catalyses the reaction 1,2-di-(9Z,12Z-octadecadienoyl)-sn-glycerol + ATP = 1,2-di-(9Z,12Z-octadecadienoyl)-sn-glycero-3-phosphate + ADP + H(+). The catalysed reaction is 1,2-di-(9Z-octadecenoyl)-sn-glycerol + ATP = 1,2-di-(9Z-octadecenoyl)-sn-glycero-3-phosphate + ADP + H(+). It participates in lipid metabolism; glycerolipid metabolism. In terms of biological role, membrane-bound diacylglycerol kinase that converts diacylglycerol/DAG into phosphatidic acid/phosphatidate/PA and regulates the respective levels of these two bioactive lipids. Thereby, acts as a central switch between the signaling pathways activated by these second messengers with different cellular targets and opposite effects in numerous biological processes. Also plays an important role in the biosynthesis of complex lipids. Displays specificity for diacylglycerol substrates with an arachidonoyl acyl chain at the sn-2 position, with the highest activity toward 1-octadecanoyl-2-(5Z,8Z,11Z,14Z-eicosatetraenoyl)-sn-glycerol the main diacylglycerol intermediate within the phosphatidylinositol turnover cycle. Can also phosphorylate diacylglycerol substrates with a linoleoyl acyl chain at the sn-2 position but much less efficiently. The polypeptide is Diacylglycerol kinase epsilon (Dgke) (Mus musculus (Mouse)).